Reading from the N-terminus, the 183-residue chain is PLAT domain-containing protein 2 (183 aa).

The first 25 residues, 1–25 (MMPRRDVLFLSLLLVIATVSAVALA), serve as a signal peptide directing secretion. The PLAT domain occupies 31-158 (CVYTFFLRTG…SPYELSAVRN (128 aa)).

It is found in the endoplasmic reticulum. In terms of biological role, involved in response to abiotic stress. This Arabidopsis thaliana (Mouse-ear cress) protein is PLAT domain-containing protein 2.